A 1027-amino-acid polypeptide reads, in one-letter code: Error-prone DNA polymerase (1027 aa).

The protein belongs to the DNA polymerase type-C family. DnaE2 subfamily.

The protein localises to the cytoplasm. It carries out the reaction DNA(n) + a 2'-deoxyribonucleoside 5'-triphosphate = DNA(n+1) + diphosphate. DNA polymerase involved in damage-induced mutagenesis and translesion synthesis (TLS). It is not the major replicative DNA polymerase. The polypeptide is Error-prone DNA polymerase (Dechloromonas aromatica (strain RCB)).